The primary structure comprises 208 residues: Sodium/potassium-transporting ATPase subunit beta-1-interacting protein 4 (208 aa).

4 consecutive transmembrane segments (helical) span residues 10–30, 35–55, 62–82, and 151–171; these read LILLCTLQLVAALERQVFDFL, APILANFLHIVATILGLFGTL, VIAYALWAAVWVTWNVFLICF, and ALQILLALLGFVYACYVTSVF.

Belongs to the NKAIN family. Interacts with atp1b1 C-terminus.

Its subcellular location is the cell membrane. In Xenopus tropicalis (Western clawed frog), this protein is Sodium/potassium-transporting ATPase subunit beta-1-interacting protein 4 (nkain4).